We begin with the raw amino-acid sequence, 417 residues long: Metal-binding activator 1 (417 aa).

The segment at residues 1-40 is a DNA-binding region (copper-fist); that stretch reads MIIFNGNKYACASCIRGHRSSTCRHSHRMLIKVRTRGRPS. The Zn(2+) site is built by Cys11, Cys14, Cys23, and His25. 2 disordered regions span residues 128 to 198 and 216 to 242; these read FLRK…IFTP and YNSS…AAPH. At Ser143 the chain carries Phosphoserine. The span at 153 to 178 shows a compositional bias: basic and acidic residues; that stretch reads SEKKERSRLQQEPIRHFSNCCKKDKS. Composition is skewed to polar residues over residues 179-190 and 228-238; these read QNPASNGKTNKA and ETLTPQSTTTI. 2 repeat units span residues 264–279 and 322–337. A 2 X 16 AA repeat of C-X-C-X(4)-C-X-C-X-X-C-X-X-H region spans residues 264–337; the sequence is CSCEDESCPC…NCTCDGCFSH (74 aa).

Its subcellular location is the nucleus. Functionally, regulatory protein involved in Cu/Fe utilization and stress resistance. Involved in basal level transcription of FRE1 and H(2)O(2)-induced transcription of CTT1. Regulates the transcription of CTR1 and CTR3 via the copper ion responsive elements in their promoters. Required for degradation of CTR1. This chain is Metal-binding activator 1 (MAC1), found in Saccharomyces cerevisiae (strain ATCC 204508 / S288c) (Baker's yeast).